Here is a 428-residue protein sequence, read N- to C-terminus: Enolase (428 aa).

Gln-163 is a binding site for (2R)-2-phosphoglycerate. Catalysis depends on Glu-205, which acts as the Proton donor. Asp-242, Glu-285, and Asp-312 together coordinate Mg(2+). Lys-337, Arg-366, Ser-367, and Lys-388 together coordinate (2R)-2-phosphoglycerate. Residue Lys-337 is the Proton acceptor of the active site.

Belongs to the enolase family. The cofactor is Mg(2+).

It localises to the cytoplasm. Its subcellular location is the secreted. The protein resides in the cell surface. The enzyme catalyses (2R)-2-phosphoglycerate = phosphoenolpyruvate + H2O. It participates in carbohydrate degradation; glycolysis; pyruvate from D-glyceraldehyde 3-phosphate: step 4/5. Its function is as follows. Catalyzes the reversible conversion of 2-phosphoglycerate (2-PG) into phosphoenolpyruvate (PEP). It is essential for the degradation of carbohydrates via glycolysis. The polypeptide is Enolase (Carboxydothermus hydrogenoformans (strain ATCC BAA-161 / DSM 6008 / Z-2901)).